Reading from the N-terminus, the 327-residue chain is GTPase Obg (327 aa).

An Obg domain is found at Met1–Leu159. The 168-residue stretch at Ala160 to Ile327 folds into the OBG-type G domain. ATP is bound by residues Gly166–Ser173, Phe191–Ile195, Asp213–Gly216, Asn280–Glu283, and Ser309–Ser311. Residues Ser173 and Thr193 each coordinate Mg(2+).

The protein belongs to the TRAFAC class OBG-HflX-like GTPase superfamily. OBG GTPase family. Monomer. Requires Mg(2+) as cofactor.

It localises to the cytoplasm. An essential GTPase which binds GTP, GDP and possibly (p)ppGpp with moderate affinity, with high nucleotide exchange rates and a fairly low GTP hydrolysis rate. Plays a role in control of the cell cycle, stress response, ribosome biogenesis and in those bacteria that undergo differentiation, in morphogenesis control. The protein is GTPase Obg of Prochlorococcus marinus (strain MIT 9301).